Consider the following 424-residue polypeptide: Insertion element IS2A uncharacterized 48.2 kDa protein (424 aa).

Residues 229–412 (KPAVPPSKRA…SPREYLRHGA (184 aa)) enclose the Integrase catalytic domain.

It belongs to the transposase 8 family.

In Escherichia coli, this protein is Insertion element IS2A uncharacterized 48.2 kDa protein.